The chain runs to 264 residues: Type 1 encapsulin shell protein (264 aa).

It belongs to the encapsulin family. Family 1 subfamily. In terms of assembly, forms hollow shells composed of 60 subunits. Monomers probably form pentamers which assemble into the shell. There are 12 pores where the pentamers meet as well as 3-fold axis channels and dimer channels; none are larger than 3-4 Angstroms in diameter. The N-terminus of the protein is inside the shell, the C-terminus is outside.

It localises to the encapsulin nanocompartment. Its function is as follows. Shell component of a type 1 encapsulin nanocompartment. Assembles into proteinaceous shells 21-24 nm in diameter. Empty organelles can be expressed in E.coli. Cargo proteins (DypB) are targeted to the interior via their C-terminal extensions. In Rhodococcus erythropolis (strain PR4 / NBRC 100887), this protein is Type 1 encapsulin shell protein.